A 471-amino-acid polypeptide reads, in one-letter code: MTETASETGSWRELLSRYLGTSIVLAGGVALYATNEFLTISLLPSTIADIGGSRLYAWVTTLYLVGSVVAATTVNTMLLRVGARSSYLMGLAVFGLASLVCAAAPSMQILVAGRTLQGIAGGLLAGLGYALINSTLPKSLWTRGSALVSAMWGVATLIGPATGGLFAQLGLWRWAFGVMTLLTALMAMLVPVALGAGGVGPGGETPVGSTHKVPVWSLLLMGAAALAISVAALPNYLVQTAGLLAAAALLVAVFVVVDWRIHAAVLPPSVFGSGPLKWIYLTMSVQMIAAMVDTYVPLFGQRLGHLTPVAAGFLGAALAVGWTVGEVASASLNSARVIGHVVAAAPLVMASGLALGAVTQRADAPVGIIALWALALLIIGTGIGIAWPHLTVRAMDSVADPAESSAAAAAINVVQLISGAFGAGLAGVVVNTAKGGEVAAARGLYMAFTVLAAAGVIASYQATHRDRRLPR.

14 helical membrane-spanning segments follow: residues 23–43, 55–75, 91–111, 116–136, 146–166, 174–194, 213–233, 237–257, 279–299, 308–328, 337–357, 366–386, 410–430, and 438–458; these read IVLA…ISLL, LYAW…TTVN, LAVF…QILV, LQGI…NSTL, ALVS…GGLF, WAFG…PVAL, VPVW…VAAL, LVQT…FVVV, IYLT…VPLF, PVAA…GEVA, VIGH…ALGA, VGII…IGIA, AINV…GVVV, and VAAA…GVIA.

This sequence belongs to the major facilitator superfamily.

It localises to the cell membrane. Could be involved in fluoroquinolones efflux. The chain is Probable multidrug-efflux transporter MT1670 from Mycobacterium tuberculosis (strain CDC 1551 / Oshkosh).